The primary structure comprises 490 residues: (21S)-21-acetyl-1-hydroxy-apo-melianone synthase CYP88A164 (490 aa).

Residues 4–24 traverse the membrane as a helical segment; the sequence is DLLWLILAIVVGTYVVLFGFL. Cys-438 is a binding site for heme.

It belongs to the cytochrome P450 family. Heme serves as cofactor. In terms of tissue distribution, mainly expressed in petioles and, to a lower extent, in roots.

Its subcellular location is the membrane. It catalyses the reaction (21S)-21-acetoxyl-apo-melianone + reduced [NADPH--hemoprotein reductase] + O2 = (21S)-21-acetyl-1-hydroxy-apo-melianone + oxidized [NADPH--hemoprotein reductase] + H2O + H(+). It participates in secondary metabolite biosynthesis; terpenoid biosynthesis. Functionally, monooxygenase involved in the biosynthesis of limonoids triterpene natural products such as azadirachtin, an antifeedant widely used as bioinsecticide, and possessing many medicinal applications including anti-tumoral, anti-malarial, anti-rheumatic, antibacterial, anti-inflammatory, anti-pyretic and diuretic effects. Catalyzes the conversion of (21S)-21-acetoxyl-apo-melianone to (21S)-21-acetyl-1-hydroxy-apo-melianone. The sequence is that of (21S)-21-acetyl-1-hydroxy-apo-melianone synthase CYP88A164 from Melia azedarach (Chinaberry tree).